The following is a 592-amino-acid chain: Aspartate--tRNA ligase (592 aa).

L-aspartate is bound at residue E173. The interval 197 to 200 (QLFK) is aspartate. L-aspartate is bound at residue R219. Residues 219–221 (RDE) and Q228 each bind ATP. H449 is a binding site for L-aspartate. Residue E483 coordinates ATP. R490 is an L-aspartate binding site. 535–538 (GLDR) provides a ligand contact to ATP.

It belongs to the class-II aminoacyl-tRNA synthetase family. Type 1 subfamily. As to quaternary structure, homodimer.

The protein localises to the cytoplasm. It catalyses the reaction tRNA(Asp) + L-aspartate + ATP = L-aspartyl-tRNA(Asp) + AMP + diphosphate. Catalyzes the attachment of L-aspartate to tRNA(Asp) in a two-step reaction: L-aspartate is first activated by ATP to form Asp-AMP and then transferred to the acceptor end of tRNA(Asp). This is Aspartate--tRNA ligase from Shewanella loihica (strain ATCC BAA-1088 / PV-4).